Consider the following 179-residue polypeptide: MIILFRGHMRDNSTEHKTRRAASSKDVRPAELDEVDRRILSLLHGDARMPNNALADTVGIAPSTCHGRVRRLVDLGVIRGFYTDIDPVAVGLPLQAMISVNLQSSARGKIRSFIQQIRRKRQVMDVYFLAGADDFILHVAARDTEDLRSFVVENLNADADVAGTQTSLIFEHLRGAAPI.

Residues 32-93 (LDEVDRRILS…DIDPVAVGLP (62 aa)) form the HTH asnC-type domain. The H-T-H motif DNA-binding region spans 51–70 (NNALADTVGIAPSTCHGRVR).

In terms of assembly, homooctamer. Homotetramer. Tetramer of dimers. The N-terminal DNA-binding domains are swapped, forming a dimer, and four dimers are assembled into an octamer through crystal symmetry.

The DNA-binding activity of AldR is modulated by interaction of AldR with various amino acids. Alanine, tryptophan, tyrosine and aspartate completely abolish the DNA binding ability of AldR. On the other hand, glutamate and asparagine reduce AldR binding to DNA but do not completely abolish it. Binding of amino acids can lead to structural modifications and changes in oligomeric association. Activity is also inhibited by 3 small molecule inhibitors, tetrahydroquinoline carbonitrile derivative (S010-0261), levothyroxine and liothyronine, which can disrupt the AldR-DNA complex. Transcriptional regulator that might play a role under hypoxic conditions. Regulates the expression of ald, which encodes L-alanine dehydrogenase. Serves as both an activator for ald expression in the presence of L-alanine and a repressor in the absence of L-alanine. Acts by binding directly to the upstream region of the ald gene. Four AldR-binding sites (O2, O1, O4 and O3) were identified upstream of the ald gene. O2, O1 and O4 are required for the induction of ald expression by alanine, while O3 is directly involved in the repression of ald expression, by occluding the access of RNA polymerase to the ald promoter. In addition to O3, both O1 and O4 are also necessary for full repression of ald expression in the absence of alanine. In Mycobacterium tuberculosis (strain ATCC 25618 / H37Rv), this protein is HTH-type transcriptional regulator AldR.